The chain runs to 269 residues: Chymotrypsin-like elastase family member 2A (269 aa).

An N-terminal signal peptide occupies residues 1-16 (MIRTLLLSTLVAGALS). The propeptide at 17–28 (CGDPTYPPYVTR) is activation peptide. In terms of domain architecture, Peptidase S1 spans 29 to 267 (VVGGEEARPN…YIDWINSVIA (239 aa)). A disulfide bridge connects residues C58 and C74. Catalysis depends on charge relay system residues H73 and D121. 3 disulfides stabilise this stretch: C155–C222, C186–C202, and C212–C243. The Charge relay system role is filled by S216.

It belongs to the peptidase S1 family. Elastase subfamily. As to quaternary structure, interacts with CPA1. Interacts with SERPINA1. Expressed in pancreas. Not detected in keratinocytes. Detected in exocrine secretions of the pancreas (at protein level). Also expressed in a small fraction of cells in pancreatic islets, adrenal cortex, intestinal glands and colonic lymphoid follicles (at protein level). Detected in plasma.

The protein localises to the secreted. It catalyses the reaction Preferential cleavage: Leu-|-Xaa, Met-|-Xaa and Phe-|-Xaa. Hydrolyzes elastin.. In terms of biological role, elastase that enhances insulin signaling and might have a physiologic role in cellular glucose metabolism. Circulates in plasma and reduces platelet hyperactivation, triggers both insulin secretion and degradation, and increases insulin sensitivity. The protein is Chymotrypsin-like elastase family member 2A of Homo sapiens (Human).